The chain runs to 286 residues: L-ribulose 3-epimerase (286 aa).

Residues His12, Ser69, Glu152, and Glu158 each coordinate D-allulose. D-fructose contacts are provided by His12, Ser69, Glu152, and Glu158. The active-site Proton donor/acceptor is the Glu152. A Mn(2+)-binding site is contributed by Glu152. Asp185 contacts Mn(2+). D-allulose-binding residues include His188, His211, Arg217, and Glu246. Residues His188, His211, Arg217, and Glu246 each contribute to the D-fructose site. A Mn(2+)-binding site is contributed by His211. Glu246 functions as the Proton donor/acceptor in the catalytic mechanism. Residue Glu246 participates in Mn(2+) binding.

This sequence belongs to the hyi family. In terms of assembly, homodimer. Mn(2+) serves as cofactor.

It catalyses the reaction L-ribulose = L-xylulose. It carries out the reaction D-ribulose = D-xylulose. The enzyme catalyses D-allulose = keto-D-fructose. The catalysed reaction is keto-L-tagatose = keto-L-sorbose. It catalyses the reaction keto-D-tagatose = keto-D-sorbose. Functionally, catalyzes the epimerization of various ketoses at the C(3) position. Exhibits the highest enzymatic activity toward L-ribulose, followed by D-ribulose, D-allulose and D-fructose. Shows lower activity with L-xylulose, L-tagatose, D-xylulose, D-tagatose, L-sorbose, D-sorbose, and weak activity with L-allulose and L-fructose. This chain is L-ribulose 3-epimerase, found in Methylomonas sp. (strain DH-1).